A 713-amino-acid polypeptide reads, in one-letter code: U3 small nucleolar RNA-associated protein 8 (713 aa).

Position 95 is a phosphothreonine (Thr-95). Ser-148 and Ser-150 each carry phosphoserine.

In terms of assembly, interacts with snoRNA U3. Interacts with MPP10 and UTP25. Component of the ribosomal small subunit (SSU) processome composed of at least 40 protein subunits and snoRNA U3. In the absence of snoRNA3, forms a complex with other t-UTPs. This complex can associate with pre-18S ribosomal RNAs.

The protein localises to the nucleus. It localises to the nucleolus. Involved in nucleolar processing of pre-18S ribosomal RNA. Also has a role in nuclear tRNA export. It acts between the steps of tRNA maturation/aminoacylation and its subsequent translocation out of the nucleus. Required for optimal pre-ribosomal RNA transcription by RNA polymerase I together with a subset of U3 proteins required for transcription (t-UTPs). The protein is U3 small nucleolar RNA-associated protein 8 (UTP8) of Saccharomyces cerevisiae (strain ATCC 204508 / S288c) (Baker's yeast).